The sequence spans 194 residues: Fe/S biogenesis protein NfuA (194 aa).

Residues Cys152 and Cys155 each coordinate [4Fe-4S] cluster.

This sequence belongs to the NfuA family. Homodimer. The cofactor is [4Fe-4S] cluster.

Functionally, involved in iron-sulfur cluster biogenesis. Binds a 4Fe-4S cluster, can transfer this cluster to apoproteins, and thereby intervenes in the maturation of Fe/S proteins. Could also act as a scaffold/chaperone for damaged Fe/S proteins. The sequence is that of Fe/S biogenesis protein NfuA from Teredinibacter turnerae (strain ATCC 39867 / T7901).